The chain runs to 308 residues: Growth/differentiation factor 15 (308 aa).

The first 29 residues, 1–29 (MPGQELRTVNGSQMLLVLLVLSWLPHGGA), serve as a signal peptide directing secretion. The propeptide occupies 30–194 (LSLAEASRAS…RPQAARGRRR (165 aa)). Residue N70 is glycosylated (N-linked (GlcNAc...) asparagine). The tract at residues 152–177 (APALHLRLSPPPSQSDQLLAESSSAR) is disordered. Residues 165-177 (QSDQLLAESSSAR) are compositionally biased toward polar residues. 4 disulfides stabilise this stretch: C203–C210, C211–C274, C240–C305, and C244–C307.

Belongs to the TGF-beta family. As to quaternary structure, homodimer; disulfide-linked. Interacts with GFRAL and RET; ligand of GFRAL, which mediates GDF15 internalization and cellular signaling through interaction with RET via the formation of a 2:2:2 ternary complex composed of GDF15, GFRAL and RET. Detected in plasma (at protein level). Highly expressed in placenta, with lower levels in prostate and colon and some expression in kidney.

The protein localises to the secreted. Its function is as follows. Hormone produced in response to various stresses to confer information about those stresses to the brain, and trigger an aversive response, characterized by nausea, vomiting, and/or loss of appetite. The aversive response is both required to reduce continuing exposure to those stresses at the time of exposure and to promote avoidance behavior in the future. Acts by binding to its receptor, GFRAL, activating GFRAL-expressing neurons localized in the area postrema and nucleus tractus solitarius of the brainstem. It then triggers the activation of neurons localized within the parabrachial nucleus and central amygdala, which constitutes part of the 'emergency circuit' that shapes responses to stressful conditions. The GDF15-GFRAL signal induces expression of genes involved in metabolism, such as lipid metabolism in adipose tissues. Required for avoidance behavior in response to food allergens: induced downstream of mast cell activation to promote aversion and minimize harmful effects of exposure to noxious substances. In addition to suppress appetite, also promotes weight loss by enhancing energy expenditure in muscle: acts by increasing calcium futile cycling in muscle. Contributes to the effect of metformin, an anti-diabetic drug, on appetite reduction and weight loss: produced in the kidney in response to metformin treatment, thereby activating the GDF15-GFRAL response, leading to reduced appetite and weight. The contribution of GDF15 to weight loss following metformin treatment is however limited and subject to discussion. Produced in response to anticancer drugs, such as camptothecin or cisplatin, promoting nausea, vomiting and contributing to malnutrition. Overproduced in many cancers, promoting anorexia in cancer (cachexia). Responsible for the risk of nausea and vomiting during pregnancy: high levels of GDF15 during pregnancy, mostly originating from the fetus, are associated with increased nausea and vomiting. Maternal sensitivity to nausea is probably determined by pre-pregnancy exposure to GDF15, women with naturally high level of GDF15 being less susceptible to nausea than women with low levels of GDF15 before pregnancy. Promotes metabolic adaptation in response to systemic inflammation caused by bacterial and viral infections in order to promote tissue tolerance and prevent tissue damage. Required for tissue tolerance in response to myocardial infarction by acting as an inhibitor of leukocyte integring activation, thereby protecting against cardiac rupture. Inhibits growth hormone signaling on hepatocytes. The polypeptide is Growth/differentiation factor 15 (Homo sapiens (Human)).